The chain runs to 163 residues: tRNA-acetylating toxin 2 (163 aa).

Tyr-137 is a catalytic residue.

The protein belongs to the acetyltransferase family. GNAT subfamily. In terms of assembly, homodimer. Forms a complex with cognate antitoxin TacA2.

The enzyme catalyses glycyl-tRNA(Gly) + acetyl-CoA = N-acetylglycyl-tRNA(Gly) + CoA + H(+). It carries out the reaction L-isoleucyl-tRNA(Ile) + acetyl-CoA = N-acetyl-L-isoleucyl-tRNA(Ile) + CoA + H(+). The catalysed reaction is L-leucyl-tRNA(Leu) + acetyl-CoA = N-acetyl-L-leucyl-tRNA(Leu) + CoA + H(+). Its function is as follows. Toxic component of a type II toxin-antitoxin (TA) system. Acetylates tRNA and inhibits translation. Acetylates mainly Gly and Ile/Leu in vitro. Overexpression during the lag phase of a tacA2-tacT2 deletion strain leads to a 100-fold increase in persister cells in the presence of cefotaxime and a non-growth state in the absence of antibiotic. This protein, which has a single amino acid compared to S.typhimurium strain 14028s (Lys-29 is Glu in 14028s), produces 100-fold more persister cells, has much higher acetylation activity and binds tRNA much better. Persister cell formation and the growth defect are neutralized by cognate antitoxin TacA2. In terms of biological role, the TacA2-TacT2 complex both represses and derepresses expression of its own operon. The chain is tRNA-acetylating toxin 2 from Salmonella enteritidis.